We begin with the raw amino-acid sequence, 438 residues long: Iroquois-class homeodomain protein IRX-6 (438 aa).

Residues 143 to 205 constitute a DNA-binding region (homeobox); sequence SAGRRKNATR…NARRRLKKEN (63 aa). 2 disordered regions span residues 205–270 and 388–438; these read NKMT…EAAV and PRDS…GAEG. Positions 214–223 are enriched in basic and acidic residues; the sequence is KGGEERKADS. The span at 252–268 shows a compositional bias: acidic residues; that stretch reads LEDLEEEEEEEEAEEEA.

The protein belongs to the TALE/IRO homeobox family. Expressed in a subset of retinal ganglion cells and bipolar cells; including in type 2 and type 3a bipolar cells.

It is found in the nucleus. Its function is as follows. Transcription factor. Binds to the iroquois binding site (IBS) motif of target genes to regulate gene expression; functions as a transcriptional activator or repressor. Modulates expression of RCVRN, VSX1, BHLHE22/BHLHB5 and TACR3/Nk3r. Required downstream of retinal bipolar cell specification for the terminal differentiation of type 2, type 3a and possibly type 6 bipolar cells. The chain is Iroquois-class homeodomain protein IRX-6 (Irx6) from Mus musculus (Mouse).